The primary structure comprises 434 residues: Homogentisate 1,2-dioxygenase (434 aa).

The active-site Proton acceptor is the His289. Positions 332 and 338 each coordinate Fe cation. 2 residues coordinate homogentisate: Tyr347 and His368. Fe cation is bound at residue His368.

It belongs to the homogentisate dioxygenase family. Hexamer; dimer of trimers. Requires Fe cation as cofactor.

It catalyses the reaction homogentisate + O2 = 4-maleylacetoacetate + H(+). The protein operates within amino-acid degradation; L-phenylalanine degradation; acetoacetate and fumarate from L-phenylalanine: step 4/6. Involved in the catabolism of homogentisate (2,5-dihydroxyphenylacetate or 2,5-OH-PhAc), a central intermediate in the degradation of phenylalanine and tyrosine. Catalyzes the oxidative ring cleavage of the aromatic ring of homogentisate to yield maleylacetoacetate. The sequence is that of Homogentisate 1,2-dioxygenase from Pseudomonas fluorescens (strain ATCC BAA-477 / NRRL B-23932 / Pf-5).